The primary structure comprises 136 residues: Small ribosomal subunit protein eS8 (136 aa).

The segment at 1 to 23 is disordered; it reads MGVYHGNDLKKPTGGKKRPHQKV. Positions 13-23 are enriched in basic residues; the sequence is TGGKKRPHQKV.

Belongs to the eukaryotic ribosomal protein eS8 family. As to quaternary structure, part of the 30S ribosomal subunit.

The polypeptide is Small ribosomal subunit protein eS8 (Hyperthermus butylicus (strain DSM 5456 / JCM 9403 / PLM1-5)).